Reading from the N-terminus, the 1119-residue chain is Protein translocase subunit SecA (1119 aa).

ATP is bound by residues Gln177, 195–199 (GEGKT), and Asp692. A disordered region spans residues 1025-1081 (APSIHEARQTKSKEKVETRKEEIPNMDERAAQSRAAGNTQRQQPEVTETIVRDRPKI). The segment covering 1029-1055 (HEARQTKSKEKVETRKEEIPNMDERAA) has biased composition (basic and acidic residues). Residues 1059–1070 (AAGNTQRQQPEV) are compositionally biased toward polar residues.

This sequence belongs to the SecA family. Monomer and homodimer. Part of the essential Sec protein translocation apparatus which comprises SecA, SecYEG and auxiliary proteins SecDF. Other proteins may also be involved.

The protein localises to the cell inner membrane. Its subcellular location is the cytoplasm. The catalysed reaction is ATP + H2O + cellular proteinSide 1 = ADP + phosphate + cellular proteinSide 2.. Functionally, part of the Sec protein translocase complex. Interacts with the SecYEG preprotein conducting channel. Has a central role in coupling the hydrolysis of ATP to the transfer of proteins into and across the cell membrane, serving as an ATP-driven molecular motor driving the stepwise translocation of polypeptide chains across the membrane. This Christiangramia forsetii (strain DSM 17595 / CGMCC 1.15422 / KT0803) (Gramella forsetii) protein is Protein translocase subunit SecA.